Reading from the N-terminus, the 401-residue chain is MAKRTKQPAQTGQDWSAPAAELLAELPADRDGLLAAAVAAVVEIDAAVMRGDGAAAELAGDRYEAIIWKLNGGTNFGCMADDEAAGRVIERHCAAVPGDVPLWGQRGQFLAVAGDVRALVEYEAGYGGPLNAHFQFHAVDLDRPFISATGYRSHFDTARGCMTVDEVARGILTAMLAEKKRPVLIEANYRDRLADAPLPDWLAGLVPPARREPATVTIPPGFVLVDVVLPAHKAFIARRWAAEAAGKVKAARAARSNAKGKAGGRERDPASAETAMRCSTAKADDCKAEAGPVSPEATMPGAGEASCSTARNGDAGPADLVEFTPAPGQRCEIVSVHHPVFAKEIGKRVIIVKVHPDTRQVWAHDDRPVTYKTNRAGRRVVDSDPSCIQSIYGFDQLRLIT.

Residues 253–311 (AARSNAKGKAGGRERDPASAETAMRCSTAKADDCKAEAGPVSPEATMPGAGEASCSTAR) are disordered.

In Escherichia coli, this protein is Protein KlcB (klcB).